Consider the following 144-residue polypeptide: Acidic phospholipase A2 (144 aa).

The first 19 residues, 1-19, serve as a signal peptide directing secretion; that stretch reads MYPAHLLVLLAVCVSLLGA. Residues 20 to 27 constitute a propeptide that is removed on maturation; sequence SDIPPLPL. Intrachain disulfides connect C38–C98, C54–C143, C56–C72, C71–C125, C78–C118, C87–C111, and C105–C116. Residues Y55, G57, and G59 each contribute to the Ca(2+) site. The active site involves H75. A Ca(2+)-binding site is contributed by D76. Residue D119 is part of the active site.

It belongs to the phospholipase A2 family. Group I subfamily. D49 sub-subfamily. Ca(2+) serves as cofactor. In terms of tissue distribution, expressed by the venom gland.

The protein localises to the secreted. The enzyme catalyses a 1,2-diacyl-sn-glycero-3-phosphocholine + H2O = a 1-acyl-sn-glycero-3-phosphocholine + a fatty acid + H(+). In terms of biological role, PLA2 catalyzes the calcium-dependent hydrolysis of the 2-acyl groups in 3-sn-phosphoglycerides. In Aipysurus laevis (Olive sea snake), this protein is Acidic phospholipase A2.